The primary structure comprises 967 residues: Isoleucine--tRNA ligase 2 (967 aa).

A 'HIGH' region motif is present at residues 58-68 (PYANGDIHIGH). Over residues 437–446 (AVTEEAGATG) the composition is skewed to low complexity. Residues 437 to 466 (AVTEEAGATGEARKVGKAEEAEEAGPAKTL) form a disordered region. Residue Glu598 coordinates L-isoleucyl-5'-AMP. The 'KMSKS' region signature appears at 639–643 (KMSKS). Residue Lys642 coordinates ATP. 4 residues coordinate Zn(2+): Cys922, Cys925, Cys942, and Cys945.

It belongs to the class-I aminoacyl-tRNA synthetase family. IleS type 1 subfamily. Monomer. It depends on Zn(2+) as a cofactor.

Its subcellular location is the cytoplasm. It carries out the reaction tRNA(Ile) + L-isoleucine + ATP = L-isoleucyl-tRNA(Ile) + AMP + diphosphate. In terms of biological role, catalyzes the attachment of isoleucine to tRNA(Ile). As IleRS can inadvertently accommodate and process structurally similar amino acids such as valine, to avoid such errors it has two additional distinct tRNA(Ile)-dependent editing activities. One activity is designated as 'pretransfer' editing and involves the hydrolysis of activated Val-AMP. The other activity is designated 'posttransfer' editing and involves deacylation of mischarged Val-tRNA(Ile). The sequence is that of Isoleucine--tRNA ligase 2 from Burkholderia mallei (strain ATCC 23344).